Consider the following 69-residue polypeptide: Small, acid-soluble spore protein A (69 aa).

This sequence belongs to the alpha/beta-type SASP family.

SASP are bound to spore DNA. They are double-stranded DNA-binding proteins that cause DNA to change to an a-like conformation. They protect the DNA backbone from chemical and enzymatic cleavage and are thus involved in dormant spore's high resistance to UV light. This chain is Small, acid-soluble spore protein A (sspA), found in Bacillus subtilis (strain 168).